We begin with the raw amino-acid sequence, 561 residues long: Lysine--tRNA ligase (561 aa).

Positions 409 and 416 each coordinate Mg(2+).

Belongs to the class-II aminoacyl-tRNA synthetase family. Homodimer. Mg(2+) serves as cofactor.

It is found in the cytoplasm. The catalysed reaction is tRNA(Lys) + L-lysine + ATP = L-lysyl-tRNA(Lys) + AMP + diphosphate. In Trichormus variabilis (strain ATCC 29413 / PCC 7937) (Anabaena variabilis), this protein is Lysine--tRNA ligase.